Here is a 331-residue protein sequence, read N- to C-terminus: Homeobox protein DBX1 (331 aa).

2 disordered regions span residues 56–94 (RAVP…ISSN) and 232–331 (KERE…ITVS). Positions 173–232 (GMLRRAVFSDVQRKALEKMFQKQKYISKPDRKKLAGKLGLKDSQVKIWFQNRRMKWRNSK) form a DNA-binding region, homeobox. Basic and acidic residues predominate over residues 256-266 (DLSDVSKKSSG). The span at 299 to 314 (PSSPFNSSSASKPSDF) shows a compositional bias: low complexity. The segment covering 315 to 331 (SDSEEEGGEQEEEITVS) has biased composition (acidic residues).

Belongs to the H2.0 homeobox family.

It is found in the nucleus. May function within the midpoint progenitor population to inhibit neuronal differentiation, possibly through modulating the function of Xash3. This chain is Homeobox protein DBX1 (dbx1), found in Xenopus laevis (African clawed frog).